The sequence spans 307 residues: Pseudouridine-5'-phosphate glycosidase (307 aa).

The active-site Proton donor is the glutamate 28. Substrate-binding residues include lysine 89 and valine 109. A Mn(2+)-binding site is contributed by aspartate 141. Residue serine 143–aspartate 145 coordinates substrate. The active-site Nucleophile is the lysine 162.

The protein belongs to the pseudouridine-5'-phosphate glycosidase family. Homotrimer. It depends on Mn(2+) as a cofactor.

It catalyses the reaction D-ribose 5-phosphate + uracil = psi-UMP + H2O. Functionally, catalyzes the reversible cleavage of pseudouridine 5'-phosphate (PsiMP) to ribose 5-phosphate and uracil. Functions biologically in the cleavage direction, as part of a pseudouridine degradation pathway. This Staphylococcus aureus (strain MW2) protein is Pseudouridine-5'-phosphate glycosidase.